A 513-amino-acid polypeptide reads, in one-letter code: Serine/threonine-protein kinase UL13 homolog (513 aa).

The interval 1-27 (MDTESKNKKTTNGGENSNCSHSTRTPD) is disordered. Positions 10–23 (TTNGGENSNCSHST) are enriched in polar residues. The Protein kinase domain occupies 145–487 (KEMPIYAGSG…FDSLNIFPYL (343 aa)). ATP-binding positions include 151–159 (AGSGSYGVV) and Lys-170. The active-site Proton acceptor is the Asp-268.

The protein belongs to the protein kinase superfamily. Ser/Thr protein kinase family. Autophosphorylated.

Its subcellular location is the virion tegument. It localises to the host nucleus. The catalysed reaction is L-seryl-[protein] + ATP = O-phospho-L-seryl-[protein] + ADP + H(+). It carries out the reaction L-threonyl-[protein] + ATP = O-phospho-L-threonyl-[protein] + ADP + H(+). Functionally, multifunctional serine/threonine kinase that plays a role in several processes including egress of virus particles from the nucleus, modulation of the actin cytoskeleton and regulation of viral and cellular gene expression. The chain is Serine/threonine-protein kinase UL13 homolog (MDV025) from Gallid herpesvirus 2 (strain Chicken/Md5/ATCC VR-987) (GaHV-2).